The following is a 455-amino-acid chain: Hexokinase-2 (455 aa).

The Hexokinase domain maps to 3–445; the sequence is ANFQQAVKKL…SGIGAALCAL (443 aa). Positions 57–195 are hexokinase small subdomain; that stretch reads TGAETGDFLA…NLPIRIEAVI (139 aa). 68–73 lines the ATP pocket; sequence DFGGTN. Residues 144-145, 161-162, and 196-197 each bind substrate; these read SY, TK, and ND. The tract at residues 196 to 434 is hexokinase large subdomain; the sequence is NDTVGTLVTR…KLISIGIAKD (239 aa). T222 contributes to the ATP binding site. The substrate site is built by N225, E252, and E283. ATP is bound by residues 288 to 289, 325 to 329, and 400 to 404; these read GM, TSVLS, and SLVEH.

This sequence belongs to the hexokinase family. Monomer.

It catalyses the reaction a D-hexose + ATP = a D-hexose 6-phosphate + ADP + H(+). The catalysed reaction is D-mannose + ATP = D-mannose 6-phosphate + ADP + H(+). It carries out the reaction D-fructose + ATP = D-fructose 6-phosphate + ADP + H(+). The enzyme catalyses D-glucose + ATP = D-glucose 6-phosphate + ADP + H(+). It participates in carbohydrate metabolism; hexose metabolism. It functions in the pathway carbohydrate degradation; glycolysis; D-glyceraldehyde 3-phosphate and glycerone phosphate from D-glucose: step 1/4. Catalyzes the phosphorylation of hexose (six-carbon sugars) to hexose 6-phosphate. Phosphorylates D-glucose, D-fructose and D-mannose. Compared to hxk1, has a much higher affinity for D-glucose. Constitutes the initial enzyme of glycolysis by catalyzing the phosphorylation of glucose to D-glucose 6-phosphate. The sequence is that of Hexokinase-2 from Schizosaccharomyces pombe (strain 972 / ATCC 24843) (Fission yeast).